Here is a 599-residue protein sequence, read N- to C-terminus: Bile salt-activated lipase (599 aa).

Positions Met1–Ala20 are cleaved as a signal peptide. A disulfide bridge connects residues Cys84 and Cys100. The N-linked (GlcNAc...) asparagine glycan is linked to Asn207. Residue Ser214 is the Acyl-ester intermediate of the active site. A disulfide bond links Cys266 and Cys277. Asn325 carries N-linked (GlcNAc...) asparagine glycosylation. Catalysis depends on charge relay system residues Asp340 and His455. Residues Thr553–Phe599 form a disordered region. 3 consecutive repeat copies span residues Leu559–Ala569, Pro570–Val580, and Pro581–Ser588. The segment at Leu559–Ser588 is 4 X 11 AA tandem repeats, O-glycosylated region.

It belongs to the type-B carboxylesterase/lipase family. In terms of assembly, interacts with CLC. EXpressed by eosinophils.

It localises to the secreted. The enzyme catalyses a triacylglycerol + H2O = a diacylglycerol + a fatty acid + H(+). It catalyses the reaction 1,2,3-tri-(9Z-octadecenoyl)-glycerol + H2O = di-(9Z)-octadecenoylglycerol + (9Z)-octadecenoate + H(+). The catalysed reaction is 1,2,3-trioctanoylglycerol + H2O = dioctanoylglycerol + octanoate + H(+). It carries out the reaction a sterol ester + H2O = a sterol + a fatty acid + H(+). The enzyme catalyses an acetyl ester + H2O = an aliphatic alcohol + acetate + H(+). It catalyses the reaction a butanoate ester + H2O = an aliphatic alcohol + butanoate + H(+). The catalysed reaction is 9-hexadecanoyloxy-octadecanoate + H2O = 9-hydroxy-octadecanoate + hexadecanoate + H(+). It carries out the reaction 9-(9Z-octadecenoyloxy)-octadecanoate + H2O = 9-hydroxy-octadecanoate + (9Z)-octadecenoate + H(+). The enzyme catalyses cholesteryl (9Z-octadecenoate) + H2O = cholesterol + (9Z)-octadecenoate + H(+). It catalyses the reaction 1-hexadecanoyl-sn-glycero-3-phosphocholine + H2O = sn-glycerol 3-phosphocholine + hexadecanoate + H(+). The catalysed reaction is 12-hexadecanoyloxy-octadecanoate + H2O = 12-hydroxyoctadecanoate + hexadecanoate + H(+). It carries out the reaction 12-(9Z-octadecenoyloxy)-octadecanoate + H2O = 12-hydroxyoctadecanoate + (9Z)-octadecenoate + H(+). The enzyme catalyses 13-(9Z-octadecenoyloxy)-octadecanoate + H2O = 13-hydroxy-octadecanoate + (9Z)-octadecenoate + H(+). It catalyses the reaction 9-(9Z-hexadecenoyloxy)-octadecanoate + H2O = (9Z)-hexadecenoate + 9-hydroxy-octadecanoate + H(+). The catalysed reaction is 12-(9Z-hexadecenoyloxy)-octadecanoate + H2O = 12-hydroxyoctadecanoate + (9Z)-hexadecenoate + H(+). It carries out the reaction 13-(9Z-hexadecenoyloxy)-octadecanoate + H2O = 13-hydroxy-octadecanoate + (9Z)-hexadecenoate + H(+). The enzyme catalyses 12-octadecanoyloxy-octadecanoate + H2O = 12-hydroxyoctadecanoate + octadecanoate + H(+). It catalyses the reaction 13-octadecanoyloxy-octadecanoate + H2O = 13-hydroxy-octadecanoate + octadecanoate + H(+). The catalysed reaction is 5-(9Z-hexadecenoyloxy)-octadecanoate + H2O = 5-hydroxy-octadecanoate + (9Z)-hexadecenoate + H(+). It carries out the reaction 9-octadecanoyloxy-octadecanoate + H2O = 9-hydroxy-octadecanoate + octadecanoate + H(+). Its activity is regulated as follows. Activated by bile salts such as sodium taurocholate. Catalyzes the hydrolysis of a wide range of substrates including cholesteryl esters, phospholipids, lysophospholipids, di- and tri-acylglycerols, and fatty acid esters of hydroxy fatty acids (FAHFAs). Preferentially hydrolyzes FAHFAs with the ester bond further away from the carboxylate. Unsaturated FAHFAs are hydrolyzed more quickly than saturated FAHFAs. Has an essential role in the complete digestion of dietary lipids and their intestinal absorption, along with the absorption of fat-soluble vitamins. This is Bile salt-activated lipase (Cel) from Mus musculus (Mouse).